A 549-amino-acid chain; its full sequence is Formate--tetrahydrofolate ligase (549 aa).

Residue 60–67 (TPYGEGKT) coordinates ATP.

Belongs to the formate--tetrahydrofolate ligase family.

The catalysed reaction is (6S)-5,6,7,8-tetrahydrofolate + formate + ATP = (6R)-10-formyltetrahydrofolate + ADP + phosphate. The protein operates within one-carbon metabolism; tetrahydrofolate interconversion. This Campylobacter concisus (strain 13826) protein is Formate--tetrahydrofolate ligase.